Consider the following 97-residue polypeptide: Co-chaperonin GroES (97 aa).

Belongs to the GroES chaperonin family. Heptamer of 7 subunits arranged in a ring. Interacts with the chaperonin GroEL.

Its subcellular location is the cytoplasm. Together with the chaperonin GroEL, plays an essential role in assisting protein folding. The GroEL-GroES system forms a nano-cage that allows encapsulation of the non-native substrate proteins and provides a physical environment optimized to promote and accelerate protein folding. GroES binds to the apical surface of the GroEL ring, thereby capping the opening of the GroEL channel. The chain is Co-chaperonin GroES from Gemmatimonas aurantiaca (strain DSM 14586 / JCM 11422 / NBRC 100505 / T-27).